The following is a 369-amino-acid chain: L-lactate oxidase (369 aa).

The region spanning glutamate 13 to tyrosine 369 is the FMN hydroxy acid dehydrogenase domain. Residue tyrosine 39 participates in pyruvate binding. FMN is bound by residues proline 92–alanine 94, serine 121, and glutamine 143. Tyrosine 145 contributes to the pyruvate binding site. Threonine 171 provides a ligand contact to FMN. Arginine 180 contributes to the pyruvate binding site. 2 residues coordinate FMN: lysine 240 and serine 262. Pyruvate-binding residues include histidine 264 and arginine 267. Catalysis depends on histidine 264, which acts as the Proton acceptor. Residues aspartate 295 to arginine 299 and arginine 319 contribute to the FMN site.

It belongs to the FMN-dependent alpha-hydroxy acid dehydrogenase family. Homotetramer. Requires FMN as cofactor.

The catalysed reaction is (S)-lactate + O2 = pyruvate + H2O2. In terms of biological role, catalyzes the oxidation of (S)-lactate (L-lactate) to pyruvate, with a reduction of O2 to H2O2. May be involved in the utilization of L-lactate as an energy source for growth. The protein is L-lactate oxidase of Lentilactobacillus hilgardii (strain ATCC 8290 / DSM 20176 / CCUG 30140 / JCM 1155 / KCTC 3500 / NBRC 15886 / NCIMB 8040 / NRRL B-1843 / 9).